The sequence spans 252 residues: Imidazole glycerol phosphate synthase subunit HisF (252 aa).

Residues Asp11 and Asp130 contribute to the active site.

It belongs to the HisA/HisF family. Heterodimer of HisH and HisF.

The protein localises to the cytoplasm. It carries out the reaction 5-[(5-phospho-1-deoxy-D-ribulos-1-ylimino)methylamino]-1-(5-phospho-beta-D-ribosyl)imidazole-4-carboxamide + L-glutamine = D-erythro-1-(imidazol-4-yl)glycerol 3-phosphate + 5-amino-1-(5-phospho-beta-D-ribosyl)imidazole-4-carboxamide + L-glutamate + H(+). It participates in amino-acid biosynthesis; L-histidine biosynthesis; L-histidine from 5-phospho-alpha-D-ribose 1-diphosphate: step 5/9. In terms of biological role, IGPS catalyzes the conversion of PRFAR and glutamine to IGP, AICAR and glutamate. The HisF subunit catalyzes the cyclization activity that produces IGP and AICAR from PRFAR using the ammonia provided by the HisH subunit. The chain is Imidazole glycerol phosphate synthase subunit HisF from Bacillus cereus (strain ZK / E33L).